The chain runs to 325 residues: Glutarate 2-hydroxylase (325 aa).

Fe cation contacts are provided by His-160, Asp-162, and His-292.

The protein belongs to the glutarate hydroxylase family. In terms of assembly, homotetramer. It depends on Fe(2+) as a cofactor.

It catalyses the reaction glutarate + 2-oxoglutarate + O2 = (S)-2-hydroxyglutarate + succinate + CO2. It participates in amino-acid degradation. In terms of biological role, acts as an alpha-ketoglutarate-dependent dioxygenase catalyzing hydroxylation of glutarate (GA) to L-2-hydroxyglutarate (L2HG). Functions in a L-lysine degradation pathway that proceeds via cadaverine, glutarate and L-2-hydroxyglutarate. This chain is Glutarate 2-hydroxylase, found in Escherichia coli O17:K52:H18 (strain UMN026 / ExPEC).